Here is a 197-residue protein sequence, read N- to C-terminus: Peptidyl-tRNA hydrolase (197 aa).

A tRNA-binding site is contributed by Tyr-17. Residue His-22 is the Proton acceptor of the active site. The tRNA site is built by Phe-68, Asn-70, and Asn-116.

Belongs to the PTH family. Monomer.

The protein resides in the cytoplasm. The enzyme catalyses an N-acyl-L-alpha-aminoacyl-tRNA + H2O = an N-acyl-L-amino acid + a tRNA + H(+). Hydrolyzes ribosome-free peptidyl-tRNAs (with 1 or more amino acids incorporated), which drop off the ribosome during protein synthesis, or as a result of ribosome stalling. Its function is as follows. Catalyzes the release of premature peptidyl moieties from peptidyl-tRNA molecules trapped in stalled 50S ribosomal subunits, and thus maintains levels of free tRNAs and 50S ribosomes. This chain is Peptidyl-tRNA hydrolase, found in Yersinia enterocolitica serotype O:8 / biotype 1B (strain NCTC 13174 / 8081).